The following is a 150-amino-acid chain: HTH-type transcriptional regulator LrpA (150 aa).

An HTH asnC-type domain is found at 5-66; that stretch reads LDDIDRILVR…RINPEAVGHL (62 aa). Positions 24-43 form a DNA-binding region, H-T-H motif; the sequence is LSELATRAGLSVSAVQSRVR. V100, G102, and E104 together coordinate L-phenylalanine.

Homohexadecamer in the absence of any added ligand. Homooctamer. Tetramer of dimers. In the presence of phenylalanine, the hexadecamer dissociates into an octamer, which further dissociates partially into lower-order oligomers.

The DNA-binding activity of LrpA is modulated by interaction of LrpA with various effector molecules, including amino acids and vitamins. The DNA binding affinity is decreased by several amino acids, including phenylalanine, tyrosine, tryptophan, histidine, leucine and aspartate. Preferentially binds to aromatic amino acids. Besides amino acids, the binding affinity is also reduced by vitamins, including B1, B3, B6, VC, B7, B9, B12, VA and VK3. Transcriptional regulator that probably plays an important role in M.tuberculosis persistence. Regulates the expression of several genes, including lat, rsmG, whiB2, lsr2 and Rv2011c. Acts by binding directly to the promoter region of the target genes. The chain is HTH-type transcriptional regulator LrpA from Mycobacterium tuberculosis (strain ATCC 25618 / H37Rv).